The sequence spans 466 residues: 55 kDa erythrocyte membrane protein (466 aa).

Threonine 2 carries the N-acetylthreonine modification. Phosphoserine occurs at positions 13 and 19. Threonine 49 carries the post-translational modification Phosphothreonine. Phosphoserine is present on residues serine 52, serine 57, and serine 110. In terms of domain architecture, PDZ spans 71 to 152; sequence LIQIEKVTEE…MISLKVIPNQ (82 aa). Residues 158–228 enclose the SH3 domain; it reads ALQMFMRAQF…PSPELQEWRV (71 aa). Serine 243 carries the phosphoserine modification. The interval 268–466 is interaction with PALS1; that stretch reads VVSYEEVVRL…PQWVPVSWVY (199 aa). The region spanning 282–451 is the Guanylate kinase-like domain; the sequence is RKTLVLIGAS…TLKKLQEAFD (170 aa).

The protein belongs to the MAGUK family. As to quaternary structure, heterodimer with PALS1. Interacts with DLG5 and NF2. Interacts (via guanylate kinase-like domain) with WHRN (via third PDZ domain). Post-translationally, palmitoylated.

It is found in the cell membrane. The protein resides in the cell projection. The protein localises to the stereocilium. Essential regulator of neutrophil polarity. Regulates neutrophil polarization by regulating AKT1 phosphorylation through a mechanism that is independent of PIK3CG activity. In Papio anubis (Olive baboon), this protein is 55 kDa erythrocyte membrane protein (MPP1).